The following is a 397-amino-acid chain: Succinate--CoA ligase [ADP-forming] subunit beta (397 aa).

Positions 9–254 (KALLKGYGAP…ETEEDAKEIE (246 aa)) constitute an ATP-grasp domain. Residues Lys46, 53–55 (GRG), Glu109, Ala112, and Glu117 contribute to the ATP site. Mg(2+) contacts are provided by Asn209 and Asp223. Residues Asn274 and 331–333 (GIM) each bind substrate.

This sequence belongs to the succinate/malate CoA ligase beta subunit family. In terms of assembly, heterotetramer of two alpha and two beta subunits. Mg(2+) serves as cofactor.

The catalysed reaction is succinate + ATP + CoA = succinyl-CoA + ADP + phosphate. It carries out the reaction GTP + succinate + CoA = succinyl-CoA + GDP + phosphate. Its pathway is carbohydrate metabolism; tricarboxylic acid cycle; succinate from succinyl-CoA (ligase route): step 1/1. In terms of biological role, succinyl-CoA synthetase functions in the citric acid cycle (TCA), coupling the hydrolysis of succinyl-CoA to the synthesis of either ATP or GTP and thus represents the only step of substrate-level phosphorylation in the TCA. The beta subunit provides nucleotide specificity of the enzyme and binds the substrate succinate, while the binding sites for coenzyme A and phosphate are found in the alpha subunit. This is Succinate--CoA ligase [ADP-forming] subunit beta from Agrobacterium fabrum (strain C58 / ATCC 33970) (Agrobacterium tumefaciens (strain C58)).